The primary structure comprises 206 residues: Protein GET1 (206 aa).

Topologically, residues 1–4 (MPSL) are lumenal. A helical transmembrane segment spans residues 5-24 (LITILLLNIVIYVINTIGAA). Residues 25–110 (TIDSLLWLFY…SFDMTVKSVR (86 aa)) are Cytoplasmic-facing. The stretch at 42 to 99 (SHMAREQRRLKREVIQLKREMNATSSQDEFAKWAKLRRRHDKALETYEAKNNELTQCK) forms a coiled coil. A helical transmembrane segment spans residues 111-131 (WAATSGLMLFLQFWYSKRPIF). Residues 132–155 (TLPPGWIPWQVQWVLSFPRAPMGT) are Lumenal-facing. The helical transmembrane segment at 156–172 (VSIQIWGGACATVVALV) threads the bilayer. Residues 173-206 (GDAVGATMGFVSASKKEGMKVGAGVGEKEGKKSQ) are Cytoplasmic-facing.

Belongs to the WRB/GET1 family. As to quaternary structure, interacts with GET3.

It is found in the endoplasmic reticulum membrane. Functionally, required for the post-translational delivery of tail-anchored (TA) proteins to the endoplasmic reticulum. Acts as a membrane receptor for soluble GET3, which recognizes and selectively binds the transmembrane domain of TA proteins in the cytosol. This Ajellomyces dermatitidis (strain ER-3 / ATCC MYA-2586) (Blastomyces dermatitidis) protein is Protein GET1.